We begin with the raw amino-acid sequence, 302 residues long: MTKLIVICGATATGKSSLALALAMRLGSVIISADSRQVYRKFDIGTAKPTVAEQKLVPHYLIDICDPTDTMTVADYQEQTQALIASVDVTPLLLVGGTGLYIRSIVQGMKIPRVAPQIELRSQLESLGQLQLYAMLQQVDPVAAQKIHANDSVRTLRALEVYYVTGCPISEQQGENPPNYPILQIGLDCDVEKLGNRIKQRTEQMIADGLVAEVEYLCQKYGADLSLLNTLGYQEIKQYLAGDISLDEAKELTILHTRQFAKRQRTWFRAYPQIEWFDANNPDLLDKIWLRINEFTNCTHSS.

9–16 (GATATGKS) is a binding site for ATP. Substrate is bound at residue 11–16 (TATGKS). The tract at residues 34–37 (DSRQ) is interaction with substrate tRNA.

This sequence belongs to the IPP transferase family. As to quaternary structure, monomer. The cofactor is Mg(2+).

It catalyses the reaction adenosine(37) in tRNA + dimethylallyl diphosphate = N(6)-dimethylallyladenosine(37) in tRNA + diphosphate. Functionally, catalyzes the transfer of a dimethylallyl group onto the adenine at position 37 in tRNAs that read codons beginning with uridine, leading to the formation of N6-(dimethylallyl)adenosine (i(6)A). This chain is tRNA dimethylallyltransferase, found in Nostoc punctiforme (strain ATCC 29133 / PCC 73102).